Here is a 390-residue protein sequence, read N- to C-terminus: (S)-8-oxocitronellyl enol synthase CYC2 (390 aa).

NADP(+) is bound by residues 35–37 (TGI), 63–64 (RR), 81–82 (DI), 105–106 (TW), and Q143. Active-site residues include K147 and Y179. 2 residues coordinate substrate: K147 and Y179. NADP(+)-binding positions include Y179 and 213–215 (SMM).

Belongs to the short-chain dehydrogenases/reductases (SDR) family. Highly divergent.

It catalyses the reaction (S)-8-oxocitronellyl enol + NADP(+) = (6E)-8-oxogeranial + NADPH + H(+). The catalysed reaction is (S)-8-oxocitronellyl enol + NAD(+) = (6E)-8-oxogeranial + NADH + H(+). Iridoid synthase that catalyzes the first step in generation of the iridoid ring scaffold using the linear monoterpene (6E)-8-oxogeranial as substrate. Iridoids comprise a large family of distinctive bicyclic monoterpenes that possess a wide range of pharmacological activities, including anticancer, anti-inflammatory, antifungal and antibacterial activities. This chain is (S)-8-oxocitronellyl enol synthase CYC2, found in Camptotheca acuminata (Happy tree).